The chain runs to 320 residues: 4-diphosphocytidyl-2-C-methyl-D-erythritol kinase (320 aa).

Lysine 26 is a catalytic residue. 111-121 (PVAGGMAGGSA) contributes to the ATP binding site. Aspartate 153 is an active-site residue.

It belongs to the GHMP kinase family. IspE subfamily.

It catalyses the reaction 4-CDP-2-C-methyl-D-erythritol + ATP = 4-CDP-2-C-methyl-D-erythritol 2-phosphate + ADP + H(+). Its pathway is isoprenoid biosynthesis; isopentenyl diphosphate biosynthesis via DXP pathway; isopentenyl diphosphate from 1-deoxy-D-xylulose 5-phosphate: step 3/6. Functionally, catalyzes the phosphorylation of the position 2 hydroxy group of 4-diphosphocytidyl-2C-methyl-D-erythritol. This chain is 4-diphosphocytidyl-2-C-methyl-D-erythritol kinase, found in Mycobacterium marinum (strain ATCC BAA-535 / M).